The primary structure comprises 511 residues: NAD(P)H-quinone oxidoreductase subunit 2, chloroplastic (511 aa).

14 helical membrane passes run 15-35, 39-59, 78-98, 108-128, 132-152, 167-187, 210-230, 244-264, 278-298, 306-326, 334-354, 377-397, 410-430, and 466-486; these read LLPE…DLTF, VLSW…VVLL, SLSI…ILLS, ALTE…LLSG, LIMI…LTGY, LLIG…LYGL, FASW…VAAA, PTPV…ALAT, WHLL…LIAI, MLGY…IAGN, LVYM…IILF, VFCF…AGFF, GFYI…YYYL, and LGIG…NPII.

This sequence belongs to the complex I subunit 2 family. As to quaternary structure, NDH is composed of at least 16 different subunits, 5 of which are encoded in the nucleus.

The protein resides in the plastid. The protein localises to the chloroplast thylakoid membrane. The enzyme catalyses a plastoquinone + NADH + (n+1) H(+)(in) = a plastoquinol + NAD(+) + n H(+)(out). It catalyses the reaction a plastoquinone + NADPH + (n+1) H(+)(in) = a plastoquinol + NADP(+) + n H(+)(out). Its function is as follows. NDH shuttles electrons from NAD(P)H:plastoquinone, via FMN and iron-sulfur (Fe-S) centers, to quinones in the photosynthetic chain and possibly in a chloroplast respiratory chain. The immediate electron acceptor for the enzyme in this species is believed to be plastoquinone. Couples the redox reaction to proton translocation, and thus conserves the redox energy in a proton gradient. This Chlorokybus atmophyticus (Soil alga) protein is NAD(P)H-quinone oxidoreductase subunit 2, chloroplastic.